Reading from the N-terminus, the 309-residue chain is 2-oxoacid:ferredoxin oxidoreductase 2, subunit beta (309 aa).

Residues Cys17, Cys20, and Cys51 each coordinate [4Fe-4S] cluster. Residues 49-52 (IGCS) and His68 each bind thiamine diphosphate. Residue Asp93 coordinates Mg(2+). Thiamine diphosphate is bound at residue 94–95 (GD). Residues Asn121 and Val123 each coordinate Mg(2+). 125-126 (GL) lines the thiamine diphosphate pocket. A [4Fe-4S] cluster-binding site is contributed by Cys200.

In terms of assembly, heterodimer composed of an alpha and a beta subunit. [4Fe-4S] cluster serves as cofactor. Requires thiamine diphosphate as cofactor. It depends on Mg(2+) as a cofactor.

It carries out the reaction a 2-oxocarboxylate + 2 oxidized [2Fe-2S]-[ferredoxin] + CoA = an acyl-CoA + 2 reduced [2Fe-2S]-[ferredoxin] + CO2 + H(+). Catalyzes the coenzyme A-dependent oxidative decarboxylation of different 2-oxoacids such as pyruvate, 2-oxobutyrate, glyoxylate and 2-oxoglutarate to form their CoA derivatives. This Aeropyrum pernix (strain ATCC 700893 / DSM 11879 / JCM 9820 / NBRC 100138 / K1) protein is 2-oxoacid:ferredoxin oxidoreductase 2, subunit beta.